Consider the following 226-residue polypeptide: NADH-quinone oxidoreductase subunit B 2 (226 aa).

The [4Fe-4S] cluster site is built by C37, C38, C103, and C132.

It belongs to the complex I 20 kDa subunit family. In terms of assembly, NDH-1 is composed of 14 different subunits. Subunits NuoB, C, D, E, F, and G constitute the peripheral sector of the complex. Requires [4Fe-4S] cluster as cofactor.

It localises to the cell membrane. It catalyses the reaction a quinone + NADH + 5 H(+)(in) = a quinol + NAD(+) + 4 H(+)(out). NDH-1 shuttles electrons from NADH, via FMN and iron-sulfur (Fe-S) centers, to quinones in the respiratory chain. The immediate electron acceptor for the enzyme in this species is believed to be a menaquinone. Couples the redox reaction to proton translocation (for every two electrons transferred, four hydrogen ions are translocated across the cytoplasmic membrane), and thus conserves the redox energy in a proton gradient. In Salinispora arenicola (strain CNS-205), this protein is NADH-quinone oxidoreductase subunit B 2.